Consider the following 703-residue polypeptide: Protein CNGC15c (703 aa).

The span at 1–10 (MGFDNPRSER) shows a compositional bias: basic and acidic residues. Positions 1-23 (MGFDNPRSERFEDDPEISKIPTT) are disordered. The next 5 membrane-spanning stretches (helical) occupy residues 91–111 (IFLVACLVSLFVDPLFFYLPV), 179–199 (GFWLDFIAALPLPQVLIWIII), 216–236 (FFIIFQYIPRLYLIFPLSSQI), 255–275 (LMLYMLASHILGACWYLLSIE), and 372–392 (FIGEIMVAIVVATLGLVLFAL). Residue 480 to 565 (LFDQMDERML…WALDPRPSVI (86 aa)) coordinates a nucleoside 3',5'-cyclic phosphate. In terms of domain architecture, IQ spans 616 to 644 (RTWAACFIQAAWRRHKKRKEAAELRAKEN). Positions 676–703 (KGVNMHSGTNSGVVSSLQKPTEPDFSDE) are disordered. Residues 681-694 (HSGTNSGVVSSLQK) are compositionally biased toward polar residues.

This sequence belongs to the cyclic nucleotide-gated cation channel (TC 1.A.1.5) family. Interacts (via N-terminus) with DMI1 (via c-terminus). The Nod factor has no effect on this interaction, implying that the complex is maintained after activation. Expressed in roots, stems, leaves, flowers and pods.

It localises to the nucleus membrane. Functionally, cyclic nucleotide-gated channel involved in the establishment of both rhizobial and mycorrhizal associations. Required for full activation of nuclear-localized Ca(2+) oscillations by Nod and Myc factors. Simultaneous activation of the K(+)-permeable channel DMI1 and the Ca(2+) channel CNGC15 can give rise to sustained Ca(2+) oscillations. May function during fertilization in both female and male gametophytic Ca(2+) signaling. This is Protein CNGC15c from Medicago truncatula (Barrel medic).